The following is a 132-amino-acid chain: MNILQQLEQEQVAKLTAGKTIPAFSPGDTVRVNVKVVEGTRERVQAYEGVVIARKNAGLNSSFTVRKISYGEGVERVFPLYSPRIDSVELVRKGDVRRAKLYYLRGRTGKSARIAERTTGHGITKKDTGSEG.

The protein belongs to the bacterial ribosomal protein bL19 family.

In terms of biological role, this protein is located at the 30S-50S ribosomal subunit interface and may play a role in the structure and function of the aminoacyl-tRNA binding site. This chain is Large ribosomal subunit protein bL19, found in Rhodospirillum centenum (strain ATCC 51521 / SW).